A 304-amino-acid chain; its full sequence is Phosphatidylinositol mannoside acyltransferase (304 aa).

His-126 (proton acceptor) is an active-site residue. Hexadecanoyl-CoA is bound by residues His-126 and Arg-164. The active site involves Glu-200. 2 residues coordinate hexadecanoyl-CoA: Ser-206 and Glu-229.

Belongs to the LpxL/LpxM/LpxP family. Monomer.

The protein resides in the cell inner membrane. It catalyses the reaction a 2,6-O-bis(alpha-D-mannopyranosyl)-1-phosphatidyl-1D-myo-inositol + an acyl-CoA = a 2-O-(alpha-D-mannosyl)-6-O-(6-O-acyl-alpha-D-mannosyl)-1-phosphatidyl-1D-myo-inositol + CoA. The enzyme catalyses a 1,2-diacyl-sn-glycero-3-phospho-[alpha-D-mannopyranosyl-(1&lt;-&gt;6)-D-myo-inositol] + an acyl-CoA = a 1,2-diacyl-sn-glycero-3-phospho-[alpha-D-6-acyl-mannopyranosyl-(1&lt;-&gt;6)-D-myo-inositol] + CoA. Its pathway is phospholipid metabolism; phosphatidylinositol metabolism. In terms of biological role, catalyzes the transfer of a palmitoyl moiety from palmitoyl-CoA to the 6-position of the mannose ring linked to the 2-position of myo-inositol in phosphatidyl-myo-inositol monomannoside (PIM1) or dimannoside (PIM2). This chain is Phosphatidylinositol mannoside acyltransferase, found in Mycolicibacterium smegmatis (strain ATCC 700084 / mc(2)155) (Mycobacterium smegmatis).